The chain runs to 103 residues: Large ribosomal subunit protein bL21 (103 aa).

This sequence belongs to the bacterial ribosomal protein bL21 family. Part of the 50S ribosomal subunit. Contacts protein L20.

In terms of biological role, this protein binds to 23S rRNA in the presence of protein L20. The sequence is that of Large ribosomal subunit protein bL21 from Clostridium perfringens (strain ATCC 13124 / DSM 756 / JCM 1290 / NCIMB 6125 / NCTC 8237 / Type A).